We begin with the raw amino-acid sequence, 992 residues long: Disks large-associated protein 1 (992 aa).

Disordered regions lie at residues 154-209 (SLEG…SWWS) and 355-375 (KAMG…SPKV). Residue S169 is modified to Phosphoserine. The segment covering 195–209 (SNASNASPTSPSWWS) has biased composition (low complexity). Phosphoserine is present on residues S362, S365, S368, S372, S389, S418, S421, S425, S428, S437, S509, S516, and S578. T579 is subject to Phosphothreonine. A phosphoserine mark is found at S581 and S605. T606 carries the post-translational modification Phosphothreonine. Phosphoserine is present on residues S608 and S611. Interaction with DYL2 stretches follow at residues 665-676 (LSIGIQVDDAEE) and 687-698 (SKFQSVGVQVEE). A disordered region spans residues 914–980 (WKQMDPLDKK…QNSATESAES (67 aa)). Basic and acidic residues-rich tracts occupy residues 918–927 (DPLDKKERRA) and 943–958 (IRER…EARK). A Phosphoserine modification is found at S947. Positions 969 to 978 (VRQNSATESA) are enriched in polar residues. The PDZ-binding motif lies at 990–992 (TRL).

This sequence belongs to the SAPAP family. As to quaternary structure, interacts with guanylate kinase-like domain of DLG1, DLG2, DLG3, DLG4 and AIP1. Interacts with the PDZ domain of SHANK1, SHANK2 and SHANK3. Found in a complex with DLG4 and SHANK1, SHANK2 or SHANK3. Found in a complex with DLG4 and BEGAIN. Interacts with DYL2 and LRFN1. Interacts with MPP2 (via the SH3-Guanylate kinase-like sub-module). Ubiquitinated by TRIM3; leading to proteasomal degradation. In terms of tissue distribution, expressed in brain and testis.

Its subcellular location is the cell membrane. The protein resides in the postsynaptic density. The protein localises to the synapse. Part of the postsynaptic scaffold in neuronal cells. The polypeptide is Disks large-associated protein 1 (Rattus norvegicus (Rat)).